Consider the following 849-residue polypeptide: Formin-like protein 4 (849 aa).

The N-terminal stretch at 1 to 22 (MPPTLALLLFLALSAVAAVGGA) is a signal peptide. The interval 36-104 (IEWTPPPSTA…RARGGGGGGT (69 aa)) is disordered. The segment covering 38 to 52 (WTPPPSTASPSPPSP) has biased composition (pro residues). Over residues 53–64 (DFSSDPSTPATP) the composition is skewed to low complexity. A helical membrane pass occupies residues 109–129 (IVVASAAAAAVLALLAFAAAF). Residues 185–194 (ARRGMCRDVD) are compositionally biased toward basic and acidic residues. Residues 185 to 364 (ARRGMCRDVD…PEPPTGPVSA (180 aa)) form a disordered region. The segment covering 234 to 246 (GSGGGGGGEGGGT) has biased composition (gly residues). Over residues 247–279 (WSEASASSPRTTTASRRSLPSLTSDFFPTTPAA) the composition is skewed to low complexity. Pro residues-rich tracts occupy residues 280–297 (APVPAPAAAAPPPAPPAP), 324–339 (PSNPPPAPPPPPPPPS), and 346–360 (PKPPPPPPPPEPPTG). Residues 406-823 (EAAGDEPRPK…SARSFRISAA (418 aa)) enclose the FH2 domain.

This sequence belongs to the formin-like family. Class-I subfamily.

The protein resides in the membrane. The polypeptide is Formin-like protein 4 (FH4) (Oryza sativa subsp. japonica (Rice)).